A 299-amino-acid polypeptide reads, in one-letter code: MNFQDVILTLNNFWAEKGCVLIQSYDTEVGAGTFHPTTLLKALGPEPWKVAYVQPSRRPTDGRYGENPNRLQHYYQYQVIIKPSPSNIQALYIESLKKLGIDPLDHDIRFVEDDWESPTLGASGLGWEVWLDGMEVTQFTYFQMAGSIELKPVSVEITYGLERLCMYLQGVDSVYDLKWNDTITYGDVYHQQEVEQSTYNFEVADTDMLFDFFNKYESEALRIIEKGLVLPAYEFGLKCSHTFNLLDARGAISVTERTGYIGRIRKIARACSNAYVAQREQMGHPLLNRPVKQERKVSK.

This sequence belongs to the class-II aminoacyl-tRNA synthetase family. As to quaternary structure, tetramer of two alpha and two beta subunits.

The protein resides in the cytoplasm. The catalysed reaction is tRNA(Gly) + glycine + ATP = glycyl-tRNA(Gly) + AMP + diphosphate. This Desulforapulum autotrophicum (strain ATCC 43914 / DSM 3382 / VKM B-1955 / HRM2) (Desulfobacterium autotrophicum) protein is Glycine--tRNA ligase alpha subunit.